Consider the following 66-residue polypeptide: Large ribosomal subunit protein uL29 (66 aa).

The protein belongs to the universal ribosomal protein uL29 family.

The chain is Large ribosomal subunit protein uL29 from Helicobacter pylori (strain P12).